Consider the following 273-residue polypeptide: 4-hydroxy-tetrahydrodipicolinate reductase (273 aa).

NAD(+) contacts are provided by residues 12-17 (GAGGRM) and glutamate 38. Position 39 (arginine 39) interacts with NADP(+). Residues 102-104 (GTT) and 126-129 (AANF) contribute to the NAD(+) site. The active-site Proton donor/acceptor is the histidine 159. Histidine 160 is a binding site for (S)-2,3,4,5-tetrahydrodipicolinate. The Proton donor role is filled by lysine 163. 169–170 (GT) is a binding site for (S)-2,3,4,5-tetrahydrodipicolinate.

It belongs to the DapB family. As to quaternary structure, homotetramer.

It localises to the cytoplasm. The catalysed reaction is (S)-2,3,4,5-tetrahydrodipicolinate + NAD(+) + H2O = (2S,4S)-4-hydroxy-2,3,4,5-tetrahydrodipicolinate + NADH + H(+). It catalyses the reaction (S)-2,3,4,5-tetrahydrodipicolinate + NADP(+) + H2O = (2S,4S)-4-hydroxy-2,3,4,5-tetrahydrodipicolinate + NADPH + H(+). The protein operates within amino-acid biosynthesis; L-lysine biosynthesis via DAP pathway; (S)-tetrahydrodipicolinate from L-aspartate: step 4/4. Its function is as follows. Catalyzes the conversion of 4-hydroxy-tetrahydrodipicolinate (HTPA) to tetrahydrodipicolinate. This Escherichia coli O139:H28 (strain E24377A / ETEC) protein is 4-hydroxy-tetrahydrodipicolinate reductase.